A 219-amino-acid polypeptide reads, in one-letter code: Formate dehydrogenase 2 subunit beta (cytochrome c-553) (219 aa).

The 4Fe-4S ferredoxin-type 1 domain occupies 3-32; sequence KAFLIDTTRCTACRGCQLACKEWHDLPANV. Positions 12, 15, 18, 22, 74, 77, 82, 124, 141, 144, 156, and 160 each coordinate [4Fe-4S] cluster. Residues 132–171 form the 4Fe-4S ferredoxin-type 2 domain; it reads DPKTKRITKCDMCFDRVSAGMQPICVKTCPTGTMAFGERD.

In terms of assembly, heterotrimer of cytochrome c3 FDH2C and formate dehydrogenase FDH2 alpha and beta subunits that forms the FdhABC(3) complex. [4Fe-4S] cluster is required as a cofactor.

It localises to the periplasm. Functionally, beta chain of the formate dehydrogenase (FDH) that catalyzes the reversible two-electron oxidation of formate to carbon dioxide. The beta chain is an electron transfer unit. The polypeptide is Formate dehydrogenase 2 subunit beta (cytochrome c-553) (Nitratidesulfovibrio vulgaris (strain ATCC 29579 / DSM 644 / CCUG 34227 / NCIMB 8303 / VKM B-1760 / Hildenborough) (Desulfovibrio vulgaris)).